Reading from the N-terminus, the 290-residue chain is Ribosomal RNA small subunit methyltransferase A (290 aa).

S-adenosyl-L-methionine-binding residues include Asn27, Leu29, Gly54, Glu75, Asp100, and Asn125.

This sequence belongs to the class I-like SAM-binding methyltransferase superfamily. rRNA adenine N(6)-methyltransferase family. RsmA subfamily.

The protein localises to the cytoplasm. The enzyme catalyses adenosine(1518)/adenosine(1519) in 16S rRNA + 4 S-adenosyl-L-methionine = N(6)-dimethyladenosine(1518)/N(6)-dimethyladenosine(1519) in 16S rRNA + 4 S-adenosyl-L-homocysteine + 4 H(+). Functionally, specifically dimethylates two adjacent adenosines (A1518 and A1519) in the loop of a conserved hairpin near the 3'-end of 16S rRNA in the 30S particle. May play a critical role in biogenesis of 30S subunits. This Streptococcus pneumoniae (strain P1031) protein is Ribosomal RNA small subunit methyltransferase A.